Consider the following 95-residue polypeptide: Histone-like DNA-binding protein (95 aa).

The protein belongs to the bacterial histone-like protein family.

The protein is Histone-like DNA-binding protein of Rickettsia conorii (strain ATCC VR-613 / Malish 7).